The primary structure comprises 288 residues: Proteasome subunit beta (288 aa).

Residues 1 to 57 (MTVDGQVGRWPVSAIPAAYMRPGSGSFTEFLAGAEPHLLPGRAGAQPAGAAPAVPHG) constitute a propeptide, removed in mature form; by autocatalysis. The Nucleophile role is filled by T58.

The protein belongs to the peptidase T1B family. In terms of assembly, the 20S proteasome core is composed of 14 alpha and 14 beta subunits that assemble into four stacked heptameric rings, resulting in a barrel-shaped structure. The two inner rings, each composed of seven catalytic beta subunits, are sandwiched by two outer rings, each composed of seven alpha subunits. The catalytic chamber with the active sites is on the inside of the barrel. Has a gated structure, the ends of the cylinder being occluded by the N-termini of the alpha-subunits. Is capped by the proteasome-associated ATPase, ARC.

The protein resides in the cytoplasm. It carries out the reaction Cleavage of peptide bonds with very broad specificity.. It participates in protein degradation; proteasomal Pup-dependent pathway. The formation of the proteasomal ATPase ARC-20S proteasome complex, likely via the docking of the C-termini of ARC into the intersubunit pockets in the alpha-rings, may trigger opening of the gate for substrate entry. Interconversion between the open-gate and close-gate conformations leads to a dynamic regulation of the 20S proteasome proteolysis activity. Component of the proteasome core, a large protease complex with broad specificity involved in protein degradation. The protein is Proteasome subunit beta of Nakamurella multipartita (strain ATCC 700099 / DSM 44233 / CIP 104796 / JCM 9543 / NBRC 105858 / Y-104) (Microsphaera multipartita).